The primary structure comprises 364 residues: Protein-glutamate methylesterase/protein-glutamine glutaminase 1 (364 aa).

Positions 6–123 (KVLCVDDSAL…RDGMLDYSEK (118 aa)) constitute a Response regulatory domain. Asp57 is modified (4-aspartylphosphate). In terms of domain architecture, CheB-type methylesterase spans 165–357 (LVSTEKLIIV…RRIMARLASM (193 aa)). Active-site residues include Ser177, His203, and Asp299.

It belongs to the CheB family. In terms of processing, phosphorylated by CheA. Phosphorylation of the N-terminal regulatory domain activates the methylesterase activity.

It is found in the cytoplasm. It catalyses the reaction [protein]-L-glutamate 5-O-methyl ester + H2O = L-glutamyl-[protein] + methanol + H(+). It carries out the reaction L-glutaminyl-[protein] + H2O = L-glutamyl-[protein] + NH4(+). In terms of biological role, involved in chemotaxis. Part of a chemotaxis signal transduction system that modulates chemotaxis in response to various stimuli. Catalyzes the demethylation of specific methylglutamate residues introduced into the chemoreceptors (methyl-accepting chemotaxis proteins or MCP) by CheR. Also mediates the irreversible deamidation of specific glutamine residues to glutamic acid. This is Protein-glutamate methylesterase/protein-glutamine glutaminase 1 from Burkholderia mallei (strain ATCC 23344).